The primary structure comprises 554 residues: Hydroxylamine reductase (554 aa).

The [2Fe-2S] cluster site is built by Cys3, Cys6, Cys18, and Cys25. Positions 252, 276, 320, 408, 436, 461, 495, and 497 each coordinate hybrid [4Fe-2O-2S] cluster. Cysteine persulfide is present on Cys408.

The protein belongs to the HCP family. [2Fe-2S] cluster is required as a cofactor. It depends on hybrid [4Fe-2O-2S] cluster as a cofactor.

The protein localises to the cytoplasm. It catalyses the reaction A + NH4(+) + H2O = hydroxylamine + AH2 + H(+). In terms of biological role, catalyzes the reduction of hydroxylamine to form NH(3) and H(2)O. The protein is Hydroxylamine reductase of Shewanella pealeana (strain ATCC 700345 / ANG-SQ1).